A 156-amino-acid polypeptide reads, in one-letter code: Small ribosomal subunit protein uS7 (156 aa).

It belongs to the universal ribosomal protein uS7 family. In terms of assembly, part of the 30S ribosomal subunit. Contacts proteins S9 and S11.

Functionally, one of the primary rRNA binding proteins, it binds directly to 16S rRNA where it nucleates assembly of the head domain of the 30S subunit. Is located at the subunit interface close to the decoding center, probably blocks exit of the E-site tRNA. The polypeptide is Small ribosomal subunit protein uS7 (Clavibacter michiganensis subsp. michiganensis (strain NCPPB 382)).